The sequence spans 98 residues: NADH-ubiquinone oxidoreductase chain 4L (98 aa).

3 consecutive transmembrane segments (helical) span residues 2–22 (SLVY…LLMF), 29–49 (SLLC…ILIL), and 61–81 (IIML…LVMV).

Belongs to the complex I subunit 4L family. In terms of assembly, core subunit of respiratory chain NADH dehydrogenase (Complex I) which is composed of 45 different subunits.

It localises to the mitochondrion inner membrane. The enzyme catalyses a ubiquinone + NADH + 5 H(+)(in) = a ubiquinol + NAD(+) + 4 H(+)(out). Core subunit of the mitochondrial membrane respiratory chain NADH dehydrogenase (Complex I) which catalyzes electron transfer from NADH through the respiratory chain, using ubiquinone as an electron acceptor. Part of the enzyme membrane arm which is embedded in the lipid bilayer and involved in proton translocation. This chain is NADH-ubiquinone oxidoreductase chain 4L (MT-ND4L), found in Galemys pyrenaicus (Iberian desman).